The sequence spans 1195 residues: ATP-dependent DNA helicase Hel308 (1195 aa).

ATP is bound by residues Gln-20 and 39-46 (IPTASGKT). One can recognise a Helicase ATP-binding domain in the interval 26–196 (RGLLDKNKNF…WLNAELIVDD (171 aa)). The short motif at 143–146 (DEIH) is the DEAH box element. The DOD-type homing endonuclease domain occupies 451–584 (FIGYFIGDGY…LQFVLLRFGI (134 aa)).

This sequence belongs to the helicase family. Hel308 subfamily. As to quaternary structure, monomer. In terms of processing, this protein undergoes a protein self splicing that involves a post-translational excision of the intervening region (intein) followed by peptide ligation.

It carries out the reaction Couples ATP hydrolysis with the unwinding of duplex DNA by translocating in the 3'-5' direction.. The enzyme catalyses ATP + H2O = ADP + phosphate + H(+). In terms of biological role, DNA-dependent ATPase and 3'-5' DNA helicase that may be involved in repair of stalled replication forks. The chain is ATP-dependent DNA helicase Hel308 from Methanocaldococcus jannaschii (strain ATCC 43067 / DSM 2661 / JAL-1 / JCM 10045 / NBRC 100440) (Methanococcus jannaschii).